The primary structure comprises 396 residues: Diphosphomevalonate decarboxylase (396 aa).

(R)-5-diphosphomevalonate-binding positions include 19-22 (YWGK), R74, 153-158 (SGSACR), and T209.

This sequence belongs to the diphosphomevalonate decarboxylase family. In terms of assembly, homodimer.

The enzyme catalyses (R)-5-diphosphomevalonate + ATP = isopentenyl diphosphate + ADP + phosphate + CO2. The protein operates within isoprenoid biosynthesis; isopentenyl diphosphate biosynthesis via mevalonate pathway; isopentenyl diphosphate from (R)-mevalonate: step 3/3. In terms of biological role, diphosphomevalonate decarboxylase; part of the second module of ergosterol biosynthesis pathway that includes the middle steps of the pathway. MVD1/ERG19 converts diphosphomevalonate into isopentenyl diphosphate. The second module is carried out in the vacuole and involves the formation of farnesyl diphosphate, which is also an important intermediate in the biosynthesis of ubiquinone, dolichol, heme and prenylated proteins. Activity by the mevalonate kinase ERG12 first converts mevalonate into 5-phosphomevalonate. 5-phosphomevalonate is then further converted to 5-diphosphomevalonate by the phosphomevalonate kinase ERG8. The diphosphomevalonate decarboxylase MVD1/ERG19 then produces isopentenyl diphosphate. The isopentenyl-diphosphate delta-isomerase IDI1 then catalyzes the 1,3-allylic rearrangement of the homoallylic substrate isopentenyl (IPP) to its highly electrophilic allylic isomer, dimethylallyl diphosphate (DMAPP). Finally the farnesyl diphosphate synthase ERG20 catalyzes the sequential condensation of isopentenyl pyrophosphate with dimethylallyl pyrophosphate, and then with the resultant geranylpyrophosphate to the ultimate product farnesyl pyrophosphate. The polypeptide is Diphosphomevalonate decarboxylase (Saccharomyces cerevisiae (strain ATCC 204508 / S288c) (Baker's yeast)).